Consider the following 397-residue polypeptide: Elongation factor Tu (397 aa).

In terms of domain architecture, tr-type G spans 10-206 (KPHVNVGTIG…TMDTYFPQPE (197 aa)). The G1 stretch occupies residues 19–26 (GHVDHGKT). Residue 19–26 (GHVDHGKT) participates in GTP binding. A Mg(2+)-binding site is contributed by T26. The segment at 60–64 (GITIA) is G2. A G3 region spans residues 81–84 (DCPG). Residues 81–85 (DCPGH) and 136–139 (NKAD) each bind GTP. The segment at 136 to 139 (NKAD) is G4. The segment at 174–176 (SAL) is G5.

Belongs to the TRAFAC class translation factor GTPase superfamily. Classic translation factor GTPase family. EF-Tu/EF-1A subfamily. In terms of assembly, monomer.

The protein localises to the cytoplasm. The enzyme catalyses GTP + H2O = GDP + phosphate + H(+). Functionally, GTP hydrolase that promotes the GTP-dependent binding of aminoacyl-tRNA to the A-site of ribosomes during protein biosynthesis. The sequence is that of Elongation factor Tu from Coxiella burnetii (strain Dugway 5J108-111).